A 533-amino-acid chain; its full sequence is uncharacterized protein (533 aa).

The N-terminal stretch at 1–21 is a signal peptide; it reads MVKVWKIGFGVFLPTALLFSA. Residue Cys22 is the site of N-palmitoyl cysteine attachment. Residue Cys22 is the site of S-diacylglycerol cysteine attachment. The disordered stretch occupies residues 91–111; that stretch reads LSKNKEGQTASQTRSSSEQTT. Positions 97 to 111 are enriched in polar residues; that stretch reads GQTASQTRSSSEQTT.

This sequence belongs to the MG067/MG068/MG395 family.

Its subcellular location is the cell membrane. This is an uncharacterized protein from Mycoplasma pneumoniae (strain ATCC 29342 / M129 / Subtype 1) (Mycoplasmoides pneumoniae).